The primary structure comprises 951 residues: MTDSKYFTTNKKGEIFELKAELNNEKKEKRKEAVKKVIAAMTVGKDVSSLFPDVVNCMQTDNLELKKLVYLYLMNYAKSQPDMAIMAVNSFVKDCEDPNPLIRALAVRTMGCIRVDKITEYLCEPLRKCLKDEDPYVRKTAAVCVAKLHDINAQMVEDQGFLDSLRDLIADSNPMVVANAVAALSEISESHPNSNLLDLNPQNINKLLTALNECTEWGQIFILDCLSNYNPKDDREAQSICERVTPRLSHANSAVVLSAVKVLMKFLELLPKESDYYNMLLKKLAPPLVTLLSGEPEVQYVALRNINLIVQKRPEILKQEIKVFFVKYNDPIYVKLEKLDIMIRLASQANIAQVLAELKEYATEVDVDFVRKAVRAIGRCAIKVEQSAERCVSTLLDLIQTKVNYVVQEAIVVIRDIFRKYPNKYESIIATLCENLDSLDEPDARAAMIWIVGEYAERIDNADELLESFLEGFHDESTQVQLTLLTAIVKLFLKKPSETQELVQQVLSLATQDSDNPDLRDRGYIYWRLLSTDPVTAKEVVLSEKPLISEETDLIEPTLLDELICHIGSLASVYHKPPNAFVEGSHGIHRKHLPIHHGSTDAGDSPVGTTTATNLEQPQVIPSQGDLLGDLLNLDLGPPVNVPQVSSMQMGAVDLLGGGLDSLLGSDLGGGIGGSPAVGQSFIPSSVPATFAPSPTPAVVSSGLNDLFELSTGIGMAPGGYVAPKAVWLPAVKAKGLEISGTFTHRQGHIYMEMNFTNKALQHMTDFAIQFNKNSFGVIPSTPLAIHTPLMPNQSIDVSLPLNTLGPVMKMEPLNNLQVAVKNNIDVFYFSCLIPLNVLFVEDGKMERQVFLATWKDIPNENELQFQIKECHLNADTVSSKLQNNNVYTIAKRNVEGQDMLYQSLKLTNGIWILAELRIQPGNPNYTLSLKCRAPEVSQYIYQVYDSILKN.

At lysine 318 the chain carries N6-acetyllysine. Tyrosine 574 is modified (3'-nitrotyrosine).

This sequence belongs to the adaptor complexes large subunit family. In terms of assembly, adaptor protein complex 1 (AP-1) is a heterotetramer composed of two large adaptins (gamma-type subunit AP1G1 and beta-type subunit AP1B1), a medium adaptin (mu-type subunit AP1M1 or AP1M2) and a small adaptin (sigma-type subunit AP1S1 or AP1S2 or AP1S3).

It localises to the cytoplasmic vesicle. The protein resides in the clathrin-coated vesicle membrane. Its subcellular location is the golgi apparatus. Its function is as follows. Subunit of clathrin-associated adaptor protein complex 1 that plays a role in protein sorting in the late-Golgi/trans-Golgi network (TGN) and/or endosomes. The AP complexes mediate both the recruitment of clathrin to membranes and the recognition of sorting signals within the cytosolic tails of transmembrane cargo molecules. The polypeptide is AP-1 complex subunit beta-1 (AP2B1) (Bos taurus (Bovine)).